Consider the following 459-residue polypeptide: ATP synthase subunit beta 1 (459 aa).

148–155 (GGAGVGKT) is a binding site for ATP.

Belongs to the ATPase alpha/beta chains family. F-type ATPases have 2 components, CF(1) - the catalytic core - and CF(0) - the membrane proton channel. CF(1) has five subunits: alpha(3), beta(3), gamma(1), delta(1), epsilon(1). CF(0) has three main subunits: a(1), b(2) and c(9-12). The alpha and beta chains form an alternating ring which encloses part of the gamma chain. CF(1) is attached to CF(0) by a central stalk formed by the gamma and epsilon chains, while a peripheral stalk is formed by the delta and b chains.

It localises to the cell inner membrane. The enzyme catalyses ATP + H2O + 4 H(+)(in) = ADP + phosphate + 5 H(+)(out). Its function is as follows. Produces ATP from ADP in the presence of a proton gradient across the membrane. The catalytic sites are hosted primarily by the beta subunits. The polypeptide is ATP synthase subunit beta 1 (Nitrosospira multiformis (strain ATCC 25196 / NCIMB 11849 / C 71)).